The primary structure comprises 100 residues: Co-chaperonin GroES (100 aa).

This sequence belongs to the GroES chaperonin family. Heptamer of 7 subunits arranged in a ring. Interacts with the chaperonin GroEL.

Its subcellular location is the cytoplasm. In terms of biological role, together with the chaperonin GroEL, plays an essential role in assisting protein folding. The GroEL-GroES system forms a nano-cage that allows encapsulation of the non-native substrate proteins and provides a physical environment optimized to promote and accelerate protein folding. GroES binds to the apical surface of the GroEL ring, thereby capping the opening of the GroEL channel. In Mycobacterium marinum (strain ATCC BAA-535 / M), this protein is Co-chaperonin GroES.